The chain runs to 179 residues: Segregation and condensation protein B (179 aa).

This sequence belongs to the ScpB family. Homodimer. Homodimerization may be required to stabilize the binding of ScpA to the Smc head domains. Component of a cohesin-like complex composed of ScpA, ScpB and the Smc homodimer, in which ScpA and ScpB bind to the head domain of Smc. The presence of the three proteins is required for the association of the complex with DNA.

The protein localises to the cytoplasm. Functionally, participates in chromosomal partition during cell division. May act via the formation of a condensin-like complex containing Smc and ScpA that pull DNA away from mid-cell into both cell halves. In Staphylococcus haemolyticus (strain JCSC1435), this protein is Segregation and condensation protein B.